Here is a 431-residue protein sequence, read N- to C-terminus: Enolase (431 aa).

Q163 contacts (2R)-2-phosphoglycerate. Catalysis depends on E205, which acts as the Proton donor. The Mg(2+) site is built by D242, E288, and D315. Residues K340, R369, S370, and K391 each contribute to the (2R)-2-phosphoglycerate site. The active-site Proton acceptor is the K340.

This sequence belongs to the enolase family. It depends on Mg(2+) as a cofactor.

Its subcellular location is the cytoplasm. The protein localises to the secreted. It is found in the cell surface. The enzyme catalyses (2R)-2-phosphoglycerate = phosphoenolpyruvate + H2O. It participates in carbohydrate degradation; glycolysis; pyruvate from D-glyceraldehyde 3-phosphate: step 4/5. Functionally, catalyzes the reversible conversion of 2-phosphoglycerate (2-PG) into phosphoenolpyruvate (PEP). It is essential for the degradation of carbohydrates via glycolysis. The chain is Enolase from Trichlorobacter lovleyi (strain ATCC BAA-1151 / DSM 17278 / SZ) (Geobacter lovleyi).